The chain runs to 508 residues: Kinesin light chain 3 (508 aa).

The disordered stretch occupies residues 1-20; that stretch reads MSVQVAAPGSTGLGPERLNP. Positions 88-150 form a coiled coil; sequence LLALSAHVSV…EEEKSHLQFL (63 aa). A disordered region spans residues 154–197; sequence RQYDPPEESQRPESPPRRDSLASLFPSEEEEKKGPEAAGAAAAQ. A compositionally biased stretch (basic and acidic residues) spans 161–173; it reads ESQRPESPPRRDS. Residue Ser173 is modified to Phosphoserine. TPR repeat units follow at residues 207-240, 249-282, 291-324, 333-366, and 375-408; these read LRTLHNLVIQYAGQGRYEVAVPLCRQALEDLERS, ATMLNILALVYRDQNKYKEATELLHDALQIREQT, AATLNNLAVLYGKRGRYREAEPLCQRALEIREKV, AKQLNNLALLCQNQGKFQDVERHYARALSIYEAL, and AKTKNNLASAYLKQNKYQQAEELYKEILSQEALP. Residues 409-441 form a disordered region; sequence APLGAPQGGTAGDTQQQVLRRSSSFSKLRESIR. Polar residues predominate over residues 420-434; that stretch reads GDTQQQVLRRSSSFS. Ser467 is modified (phosphoserine). Positions 486–508 are disordered; that stretch reads LSTRHLSEAPRTLSISTQDLSPR. Residues 498–508 are compositionally biased toward polar residues; sequence LSISTQDLSPR. Thr502 carries the phosphothreonine modification. At Ser506 the chain carries Phosphoserine.

The protein belongs to the kinesin light chain family. In terms of assembly, oligomer composed of two heavy chains and two light chains. Associates with microtubulin in an ATP-dependent manner. Interacts with KIF5C. Interacts with ODF1. Interacts with LRGUK. Interacts with VDAC2. In terms of tissue distribution, expressed in postmeiotic male germ cells (at protein level). Expressed in the testes (at protein level). Expressed in spleen, intestine, brain and ovary.

It is found in the cytoplasm. The protein localises to the cytoskeleton. Its subcellular location is the mitochondrion. In terms of biological role, kinesin is a microtubule-associated force-producing protein that may play a role in organelle transport. Plays a role during spermiogenesis in the development of the sperm tail midpiece and in the normal function of spermatozoa. May play a role in the formation of the mitochondrial sheath formation in the developing spermatid midpiece. The polypeptide is Kinesin light chain 3 (Klc3) (Mus musculus (Mouse)).